Reading from the N-terminus, the 60-residue chain is Metallothionein B (60 aa).

A beta region spans residues 1-28; sequence MDPCECSKSGTCNCGGSCTCTNCSCTSC. 20 residues coordinate a divalent metal cation: Cys4, Cys6, Cys12, Cys14, Cys18, Cys20, Cys23, Cys25, Cys28, Cys32, Cys33, Cys35, Cys36, Cys40, Cys43, Cys47, Cys49, Cys54, Cys58, and Cys59. The segment at 29–60 is alpha; it reads KKSCCPCCPSGCTKCASGCVCKGKTCDTSCCQ.

It belongs to the metallothionein superfamily. Type 1 family.

Metallothioneins have a high content of cysteine residues that bind various heavy metals. The protein is Metallothionein B (mtb) of Trematomus bernacchii (Emerald rockcod).